The chain runs to 64 residues: Antimicrobial peptide 1 (64 aa).

The first 26 residues, 1-26 (MAKVSSSLLKFAIVLILVLSMSAIIS), serve as a signal peptide directing secretion. Cystine bridges form between Cys-29–Cys-46, Cys-36–Cys-50, and Cys-45–Cys-61.

Belongs to the AMP family.

The protein resides in the secreted. Its function is as follows. Possesses antifungal and antibacterial activity. The polypeptide is Antimicrobial peptide 1 (Mesembryanthemum crystallinum (Common ice plant)).